Reading from the N-terminus, the 572-residue chain is NADP-dependent malic enzyme (572 aa).

The residue at position 1 (M1) is an N-acetylmethionine. Y102 functions as the Proton donor in the catalytic mechanism. Position 155 (R155) interacts with NADP(+). K173 serves as the catalytic Proton acceptor. E245, D246, and D269 together coordinate a divalent metal cation. NADP(+)-binding positions include D269 and 301-318; that span reads GAGEAALGIAHLIVMALE. S336 is modified (phosphoserine). N408 is a binding site for NADP(+).

This sequence belongs to the malic enzymes family. In terms of assembly, homotetramer. It depends on Mg(2+) as a cofactor. Mn(2+) is required as a cofactor. In terms of tissue distribution, expressed in all tissues tested including liver, placenta and white adipose tissue.

The protein localises to the cytoplasm. The enzyme catalyses (S)-malate + NADP(+) = pyruvate + CO2 + NADPH. It carries out the reaction oxaloacetate + H(+) = pyruvate + CO2. Catalyzes the oxidative decarboxylation of (S)-malate in the presence of NADP(+) and divalent metal ions, and decarboxylation of oxaloacetate. This chain is NADP-dependent malic enzyme, found in Homo sapiens (Human).